A 1494-amino-acid polypeptide reads, in one-letter code: ABC multidrug transporter atrG (1494 aa).

Residues 1 to 11 are compositionally biased toward polar residues; the sequence is MSLLGTINPNL. 2 disordered regions span residues 1–48 and 84–105; these read MSLL…RTSD and FSVS…TLNP. N41 carries an N-linked (GlcNAc...) asparagine glycan. 2 N-linked (GlcNAc...) asparagine glycosylation sites follow: N141 and N340. The ABC transporter 1 domain maps to 162–416; sequence LQVGALFRAV…FTTMGFECPE (255 aa). 2 consecutive transmembrane segments (helical) span residues 527-547 and 561-581; these read LTMS…SVFY and ALLF…ILTL. N-linked (GlcNAc...) asparagine glycosylation is present at N622. A run of 3 helical transmembrane segments spans residues 636–656, 669–689, and 778–798; these read GPFF…SMLF, ALVP…FTIP, and GIMF…TEYI. N-linked (GlcNAc...) asparagine glycosylation occurs at N835. The region spanning 852-1095 is the ABC transporter 2 domain; it reads FHWQDVCYDI…LASYFERNGA (244 aa). ATP is bound at residue 888 to 895; it reads GVSGAGKT. The next 5 membrane-spanning stretches (helical) occupy residues 1191 to 1211, 1227 to 1247, 1276 to 1296, 1312 to 1332, and 1351 to 1371; these read YIYS…FSFF, IFML…NFVT, LPWN…PIGL, LMWL…HMMI, and LCLI…FWIF. 2 N-linked (GlcNAc...) asparagine glycosylation sites follow: N1410 and N1432. The helical transmembrane segment at 1463 to 1483 threads the bilayer; it reads FGIMWAFIVFNIAAAVFIYWL.

This sequence belongs to the ABC transporter superfamily. ABCG family. PDR (TC 3.A.1.205) subfamily.

The protein resides in the cell membrane. It carries out the reaction (R)-miconazole(in) + ATP + H2O = (R)-miconazole(out) + ADP + phosphate + H(+). Functionally, pleiotropic ABC efflux transporter involved in the basal level of azole susceptibility. Confers resistance to miconazole and clotrimazole. This chain is ABC multidrug transporter atrG, found in Aspergillus oryzae (strain ATCC 42149 / RIB 40) (Yellow koji mold).